The following is a 326-amino-acid chain: tRNA-modifying protein YgfZ (326 aa).

Trp-27 and Trp-189 together coordinate folate.

The protein belongs to the tRNA-modifying YgfZ family.

It is found in the cytoplasm. Folate-binding protein involved in regulating the level of ATP-DnaA and in the modification of some tRNAs. It is probably a key factor in regulatory networks that act via tRNA modification, such as initiation of chromosomal replication. This is tRNA-modifying protein YgfZ from Escherichia coli O7:K1 (strain IAI39 / ExPEC).